Consider the following 155-residue polypeptide: Conopressin/neurophysin (155 aa).

A signal peptide spans Met1–Ala26. Residues Cys27 and Cys32 are joined by a disulfide bond. Gly35 carries the glycine amide modification. 7 disulfide bridges follow: Cys50–Cys94, Cys53–Cys67, Cys61–Cys84, Cys68–Cys74, Cys101–Cys115, Cys109–Cys127, and Cys116–Cys121. The N-linked (GlcNAc...) asparagine glycan is linked to Asn88.

It belongs to the vasopressin/oxytocin family. Seven disulfide bonds are present in neurophysin.

The protein resides in the secreted. The chain is Conopressin/neurophysin from Lymnaea stagnalis (Great pond snail).